The sequence spans 456 residues: UDP-N-acetylmuramoylalanine--D-glutamate ligase (456 aa).

Residue 113–119 participates in ATP binding; sequence GTNGKTT.

This sequence belongs to the MurCDEF family.

It is found in the cytoplasm. It carries out the reaction UDP-N-acetyl-alpha-D-muramoyl-L-alanine + D-glutamate + ATP = UDP-N-acetyl-alpha-D-muramoyl-L-alanyl-D-glutamate + ADP + phosphate + H(+). Its pathway is cell wall biogenesis; peptidoglycan biosynthesis. Functionally, cell wall formation. Catalyzes the addition of glutamate to the nucleotide precursor UDP-N-acetylmuramoyl-L-alanine (UMA). This is UDP-N-acetylmuramoylalanine--D-glutamate ligase from Rippkaea orientalis (strain PCC 8801 / RF-1) (Cyanothece sp. (strain PCC 8801)).